Reading from the N-terminus, the 56-residue chain is Putative zinc-binding protein YnfU (56 aa).

Zn(2+) is bound by residues cysteine 19, cysteine 22, cysteine 41, and cysteine 44.

Zn(2+) is required as a cofactor.

In Escherichia coli (strain K12), this protein is Putative zinc-binding protein YnfU.